Consider the following 216-residue polypeptide: 3-isopropylmalate dehydratase small subunit (216 aa).

This sequence belongs to the LeuD family. LeuD type 1 subfamily. Heterodimer of LeuC and LeuD.

It carries out the reaction (2R,3S)-3-isopropylmalate = (2S)-2-isopropylmalate. It functions in the pathway amino-acid biosynthesis; L-leucine biosynthesis; L-leucine from 3-methyl-2-oxobutanoate: step 2/4. Catalyzes the isomerization between 2-isopropylmalate and 3-isopropylmalate, via the formation of 2-isopropylmaleate. The polypeptide is 3-isopropylmalate dehydratase small subunit (Ralstonia nicotianae (strain ATCC BAA-1114 / GMI1000) (Ralstonia solanacearum)).